Reading from the N-terminus, the 126-residue chain is Glycine cleavage system H protein (126 aa).

Residues Thr-24–Lys-106 form the Lipoyl-binding domain. Lys-65 is modified (N6-lipoyllysine).

It belongs to the GcvH family. In terms of assembly, the glycine cleavage system is composed of four proteins: P, T, L and H. It depends on (R)-lipoate as a cofactor.

Functionally, the glycine cleavage system catalyzes the degradation of glycine. The H protein shuttles the methylamine group of glycine from the P protein to the T protein. In Psychrobacter arcticus (strain DSM 17307 / VKM B-2377 / 273-4), this protein is Glycine cleavage system H protein.